A 419-amino-acid chain; its full sequence is L-rhamnose isomerase (419 aa).

Residues histidine 262, aspartate 294, and aspartate 296 each coordinate Mn(2+).

Belongs to the rhamnose isomerase family. Homotetramer. The cofactor is Mn(2+).

It localises to the cytoplasm. The catalysed reaction is L-rhamnopyranose = L-rhamnulose. It functions in the pathway carbohydrate degradation; L-rhamnose degradation; glycerone phosphate from L-rhamnose: step 1/3. Functionally, catalyzes the interconversion of L-rhamnose and L-rhamnulose. In Enterobacter sp. (strain 638), this protein is L-rhamnose isomerase.